The primary structure comprises 420 residues: Nucleoporin NUP42 (420 aa).

The C3H1-type zinc-finger motif lies at M1–A25. The stretch at F14 to G15 is one FG 1 repeat. The interval A25–K111 is disordered. The segment covering S42 to K67 has biased composition (polar residues). FG repeat units lie at residues F82–G83, F95–G96, F218–G219, F220–G221, F228–G229, F265–G266, F271–G272, F288–G289, F345–G346, and F364–G365. A compositionally biased stretch (polar residues) spans S87 to F102. The disordered stretch occupies residues M323–F345. Residues G365–V420 are interaction with GLE1.

Probable component of the nuclear pore complex (NPC). Interacts with nuclear export protein NXF1. Interacts with GLE1. Able to form a heterotrimer with NUP155 and GLE1 in vitro. Interacts with XPO1. O-glycosylated.

The protein resides in the nucleus. The protein localises to the nuclear pore complex. It localises to the nucleus membrane. Required for the export of mRNAs containing poly(A) tails from the nucleus into the cytoplasm. The protein is Nucleoporin NUP42 (Nup42) of Mus musculus (Mouse).